Consider the following 161-residue polypeptide: MTGLKQISIYTDGSCLGNPGPGGYGIVLKYKKQTKELADGFALTTNNRMELLAPIVALEVLKVPCQVILTSDSQYMRQGITQWIHGWKRKGWLTSAGQPVKNVDLWKRLDTVSQRHQIDWRWVKGHAGHTENERCDDLARQAAEAKPSQEDSGYINQQAQA.

The region spanning 3 to 144 (GLKQISIYTD…CDDLARQAAE (142 aa)) is the RNase H type-1 domain. Residues aspartate 12, glutamate 50, aspartate 72, and aspartate 136 each coordinate Mg(2+). Residues 133–161 (ERCDDLARQAAEAKPSQEDSGYINQQAQA) are disordered. Residues 150–161 (EDSGYINQQAQA) show a composition bias toward polar residues.

It belongs to the RNase H family. Monomer. Mg(2+) is required as a cofactor.

It is found in the cytoplasm. The catalysed reaction is Endonucleolytic cleavage to 5'-phosphomonoester.. Functionally, endonuclease that specifically degrades the RNA of RNA-DNA hybrids. This is Ribonuclease H from Shewanella halifaxensis (strain HAW-EB4).